We begin with the raw amino-acid sequence, 221 residues long: Kinetochore protein Spc25 (221 aa).

A coiled-coil region spans residues V63–E114.

The protein belongs to the SPC25 family. Component of the Ndc80 complex, which is composed of Ndc80, Nuf2 and Spc25.

Its subcellular location is the nucleus. The protein localises to the chromosome. It is found in the centromere. The protein resides in the kinetochore. Functionally, acts as a component of the essential kinetochore-associated Ndc80 complex, which is required for chromosome segregation and spindle checkpoint activity during meiosis and mitosis. Required for kinetochore integrity and the organization of stable microtubule binding sites in the outer plate of the kinetochore. Participates in SAC signaling that responds specifically to disruptions in spindle microtubule dynamics. The NDC80 complex synergistically enhances the affinity of the SKA1 complex for microtubules and may allow the NDC80 complex to track depolymerizing microtubules. This is Kinetochore protein Spc25 from Drosophila eugracilis (Fruit fly).